The primary structure comprises 42 residues: MQDAKTYLSIAPVLATLWFGFLVGSLIEINRFFPNALILPSL.

A helical transmembrane segment spans residues 7–27; that stretch reads YLSIAPVLATLWFGFLVGSLI.

The protein belongs to the PsaJ family.

It localises to the plastid membrane. May help in the organization of the PsaE and PsaF subunits. In Aneura mirabilis (Parasitic liverwort), this protein is Photosystem I reaction center subunit IX.